The chain runs to 935 residues: Lon protease homolog 2, peroxisomal (935 aa).

The 285-residue stretch at 12 to 296 folds into the Lon N-terminal domain; that stretch reads LPVHRLERNL…NLRRLVEEMG (285 aa). 452–459 is a binding site for ATP; sequence GPPGVGKT. Residues 692–922 enclose the Lon proteolytic domain; the sequence is QKGYGVVNGL…SDVLASVWEG (231 aa). Active-site residues include Ser-789 and Lys-832. Residues 933-935 carry the Microbody targeting signal motif; that stretch reads ARI.

It belongs to the peptidase S16 family.

The protein localises to the peroxisome matrix. The enzyme catalyses Hydrolysis of proteins in presence of ATP.. Its function is as follows. ATP-dependent serine protease that mediates the selective degradation of misfolded and unassembled polypeptides in the peroxisomal matrix. Necessary for type 2 peroxisome targeting signal (PTS2)-containing protein processing and facilitates peroxisome matrix protein import. The polypeptide is Lon protease homolog 2, peroxisomal (PLN) (Pichia angusta (Yeast)).